Reading from the N-terminus, the 444-residue chain is Argininosuccinate synthase (444 aa).

ATP-binding positions include 17–25 (AFSGGLDTS) and alanine 43. L-citrulline is bound at residue tyrosine 99. Residues glycine 129 and threonine 131 each coordinate ATP. L-aspartate-binding residues include threonine 131, asparagine 135, and aspartate 136. Asparagine 135 lines the L-citrulline pocket. Residue aspartate 136 participates in ATP binding. Residues arginine 139 and serine 192 each contribute to the L-citrulline site. Aspartate 194 provides a ligand contact to ATP. L-citrulline-binding residues include threonine 201, glutamate 203, and glutamate 280.

Belongs to the argininosuccinate synthase family. Type 2 subfamily. Homotetramer.

Its subcellular location is the cytoplasm. It catalyses the reaction L-citrulline + L-aspartate + ATP = 2-(N(omega)-L-arginino)succinate + AMP + diphosphate + H(+). It functions in the pathway amino-acid biosynthesis; L-arginine biosynthesis; L-arginine from L-ornithine and carbamoyl phosphate: step 2/3. The sequence is that of Argininosuccinate synthase from Burkholderia lata (strain ATCC 17760 / DSM 23089 / LMG 22485 / NCIMB 9086 / R18194 / 383).